The following is a 795-amino-acid chain: Phenylalanine--tRNA ligase beta subunit (795 aa).

Residues 39 to 148 enclose the tRNA-binding domain; it reads AGSFHGVVVG…ADAPIGTDIR (110 aa). One can recognise a B5 domain in the interval 401–476; the sequence is PKRATITLRR…RVYGYNNIPD (76 aa). Residues Asp-454, Asp-460, Glu-463, and Glu-464 each contribute to the Mg(2+) site. The FDX-ACB domain occupies 701–794; it reads SRFPANRRDI…LKERFQASLR (94 aa).

Belongs to the phenylalanyl-tRNA synthetase beta subunit family. Type 1 subfamily. Tetramer of two alpha and two beta subunits. It depends on Mg(2+) as a cofactor.

The protein resides in the cytoplasm. It carries out the reaction tRNA(Phe) + L-phenylalanine + ATP = L-phenylalanyl-tRNA(Phe) + AMP + diphosphate + H(+). The chain is Phenylalanine--tRNA ligase beta subunit from Escherichia coli O157:H7.